A 223-amino-acid polypeptide reads, in one-letter code: Alpha-enolase (223 aa).

Serine 8 contacts Mg(2+). Tyrosine 12 bears the Phosphotyrosine mark. Residue lysine 25 is modified to N6-acetyllysine. Glutamate 39 contacts substrate. Residue lysine 61 is modified to N6-acetyllysine. Glutamate 69 acts as the Proton donor in catalysis. At lysine 87 the chain carries N6-acetyllysine; alternate. At lysine 87 the chain carries N6-malonyllysine; alternate. Lysine 87 carries the post-translational modification N6-succinyllysine; alternate. Positions 99 and 119 each coordinate Mg(2+). Residue aspartate 119 participates in substrate binding. N6-acetyllysine is present on residues lysine 133 and lysine 141. Lysine 141 serves as the catalytic Proton acceptor. Substrate contacts are provided by residues serine 168–serine 171 and lysine 192. The segment at tyrosine 202–lysine 223 is required for interaction with PLG. Lysine 215 carries the post-translational modification N6-acetyllysine; alternate. Position 215 is an N6-malonyllysine; alternate (lysine 215). Position 215 is an N6-succinyllysine; alternate (lysine 215).

The protein belongs to the enolase family. In terms of assembly, mammalian enolase is composed of 3 isozyme subunits, alpha, beta and gamma, which can form homodimers or heterodimers which are cell-type and development-specific. ENO1 interacts with PLG in the neuronal plasma membrane and promotes its activation. The C-terminal lysine is required for this binding. Interacts with ENO4 and PGAM2. Interacts with CMTM6. Requires Mg(2+) as cofactor. ISGylated. Post-translationally, lysine 2-hydroxyisobutyrylation (Khib) by p300/EP300 activates the phosphopyruvate hydratase activity.

It localises to the cytoplasm. The protein resides in the cell membrane. It carries out the reaction (2R)-2-phosphoglycerate = phosphoenolpyruvate + H2O. It participates in carbohydrate degradation; glycolysis; pyruvate from D-glyceraldehyde 3-phosphate: step 4/5. Its function is as follows. Glycolytic enzyme the catalyzes the conversion of 2-phosphoglycerate to phosphoenolpyruvate. In addition to glycolysis, involved in various processes such as growth control, hypoxia tolerance and allergic responses. May also function in the intravascular and pericellular fibrinolytic system due to its ability to serve as a receptor and activator of plasminogen on the cell surface of several cell-types such as leukocytes and neurons. Stimulates immunoglobulin production. In Mesocricetus auratus (Golden hamster), this protein is Alpha-enolase.